We begin with the raw amino-acid sequence, 399 residues long: Centrosomal protein 43 (399 aa).

The LisH domain maps to 70–102 (DGRLVASLVAEFLQFFNLDFTLAVFHPETSTIQ). Disordered regions lie at residues 142-216 (PASV…SKSS) and 236-311 (DARD…KRGS). A phosphoserine mark is found at Ser-152 and Ser-160. The segment covering 163–172 (GKSSANSTPS) has biased composition (polar residues). Thr-170 bears the Phosphothreonine mark. The segment covering 175–186 (PRYKGQGKKKTI) has biased composition (basic residues). The span at 197-216 (SETSQSEPSVSLSESKSKSS) shows a compositional bias: low complexity. A Phosphoserine modification is found at Ser-202. Residues 246–256 (DGDDVEGDSFF) show a composition bias toward acidic residues. Basic and acidic residues predominate over residues 259-275 (PIPKPEKTYGWRAEPRK). Residues 290-302 (RSGLSSLAGAPSL) are compositionally biased toward low complexity. Residues Ser-301 and Ser-326 each carry the phosphoserine modification. The disordered stretch occupies residues 328-354 (GLGTGEDEDYADDFNSASHRSEKSELS). Tyr-337 bears the Phosphotyrosine mark.

Belongs to the CEP43 family. In terms of assembly, homodimer. Part of a ternary complex that contains CEP350, CEP43 and MAPRE1. Interacts directly with CEP350 and MAPRE1. Interacts with CEP19. Interacts (via N-terminus) with CEP350 (via C-terminus).

The protein localises to the cytoplasm. It is found in the cytoskeleton. The protein resides in the microtubule organizing center. It localises to the centrosome. Its subcellular location is the centriole. The protein localises to the cilium basal body. Functionally, required for anchoring microtubules to the centrosomes. Required for ciliation. The protein is Centrosomal protein 43 of Mus musculus (Mouse).